Reading from the N-terminus, the 135-residue chain is uncharacterized protein (135 aa).

The segment at 1 to 36 is disordered; the sequence is MSHAEKPMSDSVNHHHHRTFEVLTAEPVRSRRKPRH.

Belongs to the transposase 8 family.

This is an uncharacterized protein from Sinorhizobium fredii (strain NBRC 101917 / NGR234).